The sequence spans 99 residues: MIASMKPWPLVMVAALCILFCLGTLVDAYPTKPESPGPDATPEELAEYMTKIRQYINLVTRQRYGKRSSPETLMSELIFGENSNSDHSSRSRFDDSYMW.

An N-terminal signal peptide occupies residues 1–28 (MIASMKPWPLVMVAALCILFCLGTLVDA). Position 64 is a tyrosine amide (Tyr64). Residues 68–99 (SSPETLMSELIFGENSNSDHSSRSRFDDSYMW) constitute a propeptide, C-terminal extension.

This sequence belongs to the NPY family. In terms of tissue distribution, expressed by the mandibular venom gland.

The protein localises to the secreted. Its function is as follows. Shows a potent unique triphasic action, rapid biphasic hypertension followed by prolonged hypotension. The protein is Goannatyrotoxin-Vere1 of Varanus eremius (Rusty desert monitor).